A 561-amino-acid chain; its full sequence is Transmembrane protein 209 (561 aa).

A phosphoserine mark is found at Ser-9 and Ser-11. Residues 28–48 traverse the membrane as a helical segment; that stretch reads VVLAWGLLNVSMAGMIYTEMT. Asn-57 carries N-linked (GlcNAc...) asparagine glycosylation. A helical transmembrane segment spans residues 60 to 80; the sequence is YWPLWYIELALASLFSLNALF. Ser-98 carries the post-translational modification Phosphoserine. 2 disordered regions span residues 119-157 and 195-234; these read DLAATQIPPAPPSPSIQGQSVLSYSPSRSPSTSPKFTTS and FSPSPPSPYPTTVGPVESSGLRSRYRSSPTVYNSPTDKED. Residues 133-157 are compositionally biased toward low complexity; sequence SIQGQSVLSYSPSRSPSTSPKFTTS. Phosphoserine occurs at positions 201, 222, and 248. Polar residues predominate over residues 220–229; sequence RSSPTVYNSP. A disordered region spans residues 250 to 271; sequence EEKQHRVKLGSPDSTSPSSSPT. The segment covering 260–271 has biased composition (low complexity); sequence SPDSTSPSSSPT. Residue Asn-274 is glycosylated (N-linked (GlcNAc...) asparagine). Ser-278 is modified (phosphoserine).

As to quaternary structure, interacts with NUP205. Expressed in the testis.

It localises to the membrane. Its subcellular location is the nucleus envelope. It is found in the golgi apparatus. The protein localises to the cytoplasm. Nuclear envelope protein which in association with NUP205, may be involved in nuclear transport of various nuclear proteins in addition to MYC. This is Transmembrane protein 209 (TMEM209) from Homo sapiens (Human).